The following is a 396-amino-acid chain: Elongation factor Tu (396 aa).

Positions Lys-10–Glu-206 constitute a tr-type G domain. The G1 stretch occupies residues Gly-19 to Thr-26. Residue Gly-19–Thr-26 participates in GTP binding. Thr-26 contributes to the Mg(2+) binding site. The interval Gly-60 to Ala-64 is G2. The segment at Asp-81–Gly-84 is G3. Residues Asp-81 to His-85 and Asn-136 to Asp-139 each bind GTP. The G4 stretch occupies residues Asn-136–Asp-139. A G5 region spans residues Ser-174–Leu-176.

The protein belongs to the TRAFAC class translation factor GTPase superfamily. Classic translation factor GTPase family. EF-Tu/EF-1A subfamily. In terms of assembly, monomer.

It localises to the cytoplasm. The catalysed reaction is GTP + H2O = GDP + phosphate + H(+). In terms of biological role, GTP hydrolase that promotes the GTP-dependent binding of aminoacyl-tRNA to the A-site of ribosomes during protein biosynthesis. The polypeptide is Elongation factor Tu (Geobacter metallireducens (strain ATCC 53774 / DSM 7210 / GS-15)).